We begin with the raw amino-acid sequence, 78 residues long: U7-lycotoxin-Ls1d (78 aa).

The signal sequence occupies residues 1-22; it reads MKLIIFTGLALLLIVSLIDVEA. A propeptide spanning residues 23–26 is cleaved from the precursor; that stretch reads QNEG.

This sequence belongs to the neurotoxin 19 (CSTX) family. 07 (U7-Lctx) subfamily. Contains 4 disulfide bonds. In terms of tissue distribution, expressed by the venom gland.

It is found in the secreted. The protein is U7-lycotoxin-Ls1d of Lycosa singoriensis (Wolf spider).